Here is a 217-residue protein sequence, read N- to C-terminus: dITP/XTP pyrophosphatase (217 aa).

7–12 (SRNKKK) is a binding site for substrate. The active-site Proton acceptor is the Asp-72. A Mg(2+)-binding site is contributed by Asp-72. Residues Ser-73, 163–166 (FGYD), Lys-195, and 200–201 (HR) each bind substrate.

This sequence belongs to the HAM1 NTPase family. As to quaternary structure, homodimer. Mg(2+) is required as a cofactor.

The catalysed reaction is XTP + H2O = XMP + diphosphate + H(+). The enzyme catalyses dITP + H2O = dIMP + diphosphate + H(+). It carries out the reaction ITP + H2O = IMP + diphosphate + H(+). Pyrophosphatase that catalyzes the hydrolysis of nucleoside triphosphates to their monophosphate derivatives, with a high preference for the non-canonical purine nucleotides XTP (xanthosine triphosphate), dITP (deoxyinosine triphosphate) and ITP. Seems to function as a house-cleaning enzyme that removes non-canonical purine nucleotides from the nucleotide pool, thus preventing their incorporation into DNA/RNA and avoiding chromosomal lesions. The sequence is that of dITP/XTP pyrophosphatase from Corynebacterium jeikeium (strain K411).